The following is a 695-amino-acid chain: MKKLNYLLIVSFIFILNLLISKSQVLIDVTAKCELIDSLSPCKDNLNYTHIYLPTGYTQAAISAQITPLFQQASILPTDCQSNLKNLLCISSYMECNENIPNISPSFPLPSYPCNKYCEKVKDVCSAYMAILGPYVNCSAVQNGNEFFPHTGTDYDLTAYGGSANEEIQCSGPNLASNSTSAPIKFCPSPLIWVDSDTINNKRAYQETTPNCVLPCPTNVYTEKEYKTKFYSEAILFSFSTACSFYLIFTFGVFPNKYTNRNWIIVYLGITAICLAISYAVQEARYGGGDWRCTSDPGRYKSSEDGTCILGGFFFQIGGLGTILFLSLYSFDMFLTMNMMTNKYFIQTSVGMWALIIFYALLPIKHYESSIASAGCWLSNEDNMFWQYFCFYVPSYVATFFLGVFIITSIYKVFKMTVMFKSIKDKRILLLNIRSIIFLIAIMFCVSFSTMYPLYVTYNGDDFSKSVEVYVTCLYANIPNGNEVCPQIVFPQFSLRYMNAITMAIIGIVGLIGLGIDPHILQIYRESIRFKFLLGLVGIQWGTNSPQPLKQGSTTDSSSGSGSGNGSNSGNNRENRKSQRKSRGVSIGMKKINLSASSESSNNLLNQSTPGNLNINESISSIDTSNNNNNNNNNNNNNNNNNNNNNNNNNNNNNNNNNNNNNNNNNNNNNNNYSNNNNNNNNNNNNIERINSDNV.

An N-terminal signal peptide occupies residues 1 to 23; the sequence is MKKLNYLLIVSFIFILNLLISKS. Residues 24-233 lie on the Extracellular side of the membrane; that stretch reads QVLIDVTAKC…KEYKTKFYSE (210 aa). An FZ domain is found at 28 to 173; the sequence is DVTAKCELID…ANEEIQCSGP (146 aa). 5 cysteine pairs are disulfide-bonded: Cys33-Cys96, Cys42-Cys89, Cys80-Cys125, Cys114-Cys170, and Cys118-Cys138. N-linked (GlcNAc...) asparagine glycosylation occurs at Asn47. Asn137 and Asn178 each carry an N-linked (GlcNAc...) asparagine glycan. The helical transmembrane segment at 234 to 254 threads the bilayer; it reads AILFSFSTACSFYLIFTFGVF. Topologically, residues 255 to 262 are cytoplasmic; the sequence is PNKYTNRN. A helical transmembrane segment spans residues 263-283; the sequence is WIIVYLGITAICLAISYAVQE. The Extracellular portion of the chain corresponds to 284–307; sequence ARYGGGDWRCTSDPGRYKSSEDGT. A helical membrane pass occupies residues 308 to 328; it reads CILGGFFFQIGGLGTILFLSL. Topologically, residues 329–343 are cytoplasmic; that stretch reads YSFDMFLTMNMMTNK. A helical membrane pass occupies residues 344–364; sequence YFIQTSVGMWALIIFYALLPI. Residues 365–387 are Extracellular-facing; that stretch reads KHYESSIASAGCWLSNEDNMFWQ. A helical membrane pass occupies residues 388 to 408; the sequence is YFCFYVPSYVATFFLGVFIIT. At 409–435 the chain is on the cytoplasmic side; the sequence is SIYKVFKMTVMFKSIKDKRILLLNIRS. Residues 436-456 form a helical membrane-spanning segment; the sequence is IIFLIAIMFCVSFSTMYPLYV. Over 457-500 the chain is Extracellular; the sequence is TYNGDDFSKSVEVYVTCLYANIPNGNEVCPQIVFPQFSLRYMNA. Residues 501–521 traverse the membrane as a helical segment; it reads ITMAIIGIVGLIGLGIDPHIL. The Cytoplasmic segment spans residues 522-695; that stretch reads QIYRESIRFK…NIERINSDNV (174 aa). The span at 545-556 shows a compositional bias: polar residues; sequence SPQPLKQGSTTD. Positions 545-695 are disordered; the sequence is SPQPLKQGST…NIERINSDNV (151 aa). Residues 593-608 show a composition bias toward low complexity; it reads NLSASSESSNNLLNQS. A compositionally biased stretch (polar residues) spans 609-625; sequence TPGNLNINESISSIDTS. The span at 626 to 686 shows a compositional bias: low complexity; sequence NNNNNNNNNN…NNNNNNNNNN (61 aa). Positions 653–691 form a coiled coil; it reads NNNNNNNNNNNNNNNNNNNNYSNNNNNNNNNNNNIERIN.

This sequence belongs to the G-protein coupled receptor Fz/Smo family.

The protein localises to the membrane. The protein is Frizzled and smoothened-like protein O (fslO) of Dictyostelium discoideum (Social amoeba).